A 612-amino-acid polypeptide reads, in one-letter code: Lysophospholipase (612 aa).

Residues Asp-1–Arg-9 form the signal peptide. The PLA2c domain occupies Ser-24–Asn-571. N-linked (GlcNAc...) asparagine glycans are attached at residues Asn-41, Asn-81, Asn-116, Asn-150, Asn-223, Asn-267, Asn-306, Asn-335, Asn-427, Asn-440, Asn-446, Asn-477, Asn-498, Asn-526, Asn-532, Asn-567, and Asn-571.

Belongs to the lysophospholipase family. N-glycosylated.

The protein localises to the secreted. The catalysed reaction is a 1-acyl-sn-glycero-3-phosphocholine + H2O = sn-glycerol 3-phosphocholine + a fatty acid + H(+). Its function is as follows. Catalyzes the release of fatty acids from lysophospholipids. This is Lysophospholipase from Penicillium chrysogenum (Penicillium notatum).